A 351-amino-acid chain; its full sequence is Transcription elongation factor A N-terminal and central domain-containing protein (351 aa).

Residues 5 to 82 (NQIAARASLI…SKWKAVYKQT (78 aa)) form the TFIIS N-terminal domain. 2 disordered regions span residues 86-119 (ARNS…GICS) and 144-169 (LKPK…LLDP). A compositionally biased stretch (polar residues) spans 103-119 (SGPSHDPSQNETLGICS). Basic and acidic residues predominate over residues 145–165 (KPKEEHFGDGDPESTGKRSSE). Residues 173–289 (MRTKCIELLY…EHYLPQVIDG (117 aa)) form the TFIIS central domain.

The polypeptide is Transcription elongation factor A N-terminal and central domain-containing protein (TCEANC) (Homo sapiens (Human)).